The sequence spans 163 residues: Large ribosomal subunit protein uL10 (163 aa).

This sequence belongs to the universal ribosomal protein uL10 family. Part of the ribosomal stalk of the 50S ribosomal subunit. The N-terminus interacts with L11 and the large rRNA to form the base of the stalk. The C-terminus forms an elongated spine to which L12 dimers bind in a sequential fashion forming a multimeric L10(L12)X complex.

Its function is as follows. Forms part of the ribosomal stalk, playing a central role in the interaction of the ribosome with GTP-bound translation factors. This Actinobacillus pleuropneumoniae serotype 5b (strain L20) protein is Large ribosomal subunit protein uL10.